Consider the following 48-residue polypeptide: Cytochrome b559 subunit beta (48 aa).

Residues 23–39 form a helical membrane-spanning segment; sequence WLAVHALAIPSVFFLGS. His27 contacts heme.

Belongs to the PsbE/PsbF family. As to quaternary structure, heterodimer of an alpha subunit and a beta subunit. PSII is composed of 1 copy each of membrane proteins PsbA, PsbB, PsbC, PsbD, PsbE, PsbF, PsbH, PsbI, PsbJ, PsbK, PsbL, PsbM, PsbT, PsbX, PsbY, Psb30/Ycf12, peripheral proteins PsbO, CyanoQ (PsbQ), PsbU, PsbV and a large number of cofactors. It forms dimeric complexes. Heme b is required as a cofactor.

The protein resides in the cellular thylakoid membrane. Its function is as follows. This b-type cytochrome is tightly associated with the reaction center of photosystem II (PSII). PSII is a light-driven water:plastoquinone oxidoreductase that uses light energy to abstract electrons from H(2)O, generating O(2) and a proton gradient subsequently used for ATP formation. It consists of a core antenna complex that captures photons, and an electron transfer chain that converts photonic excitation into a charge separation. The sequence is that of Cytochrome b559 subunit beta from Prochlorococcus marinus (strain MIT 9301).